The primary structure comprises 312 residues: Olfactory receptor 10D3 (312 aa).

Residues 1–26 (MEIKNCSVVTEFILLGIPHTEGFETL) lie on the Extracellular side of the membrane. N-linked (GlcNAc...) asparagine glycosylation occurs at N5. Residues 27-47 (LFVLFLPFYACTLVGNVSILV) traverse the membrane as a helical segment. The Cytoplasmic portion of the chain corresponds to 48–57 (AVISSTRLHT). Residues 58–78 (PMYFFLGNLSVFDMGFSSVTC) traverse the membrane as a helical segment. The Extracellular portion of the chain corresponds to 79-97 (PKMLFYLMGLSRLISYQDC). Residues C97 and C179 are joined by a disulfide bond. A helical transmembrane segment spans residues 98-118 (VSQLFFFHFLGSIECFLYTVM). Topologically, residues 119–139 (AYDRFAAICHPLRYSVIMNSK) are cytoplasmic. Residues 140 to 160 (ICVALAVGTWLLGCFHSSVLT) traverse the membrane as a helical segment. Residues 161-197 (SLTFTLPYCGPNEVDHFFCDIPAILPLASADTSLAQR) are Extracellular-facing. Residues 198 to 218 (VSFTNVGLVSLVCFLLILLSY) traverse the membrane as a helical segment. Over 219–239 (TRITISILSIQSTEGRQRAFS) the chain is Cytoplasmic. Residues 240–260 (TCSAHLIAILCAYGPIITIYL) form a helical membrane-spanning segment. Over 261–266 (QPTPNP) the chain is Extracellular. The chain crosses the membrane as a helical span at residues 267-287 (MLGTVVQILMNLVGPMLNPLI). Topologically, residues 288 to 312 (YTLRNKEVKIALKKILHGKGSVSEG) are cytoplasmic.

It belongs to the G-protein coupled receptor 1 family.

Its subcellular location is the cell membrane. Functionally, potential odorant receptor. In Mus musculus (Mouse), this protein is Olfactory receptor 10D3.